We begin with the raw amino-acid sequence, 418 residues long: Glutamyl-tRNA reductase (418 aa).

Substrate is bound by residues 49–52, S109, 114–116, and Q120; these read TCNR and EPQ. Catalysis depends on C50, which acts as the Nucleophile. 189-194 serves as a coordination point for NADP(+); that stretch reads GAGETI.

The protein belongs to the glutamyl-tRNA reductase family. Homodimer.

The enzyme catalyses (S)-4-amino-5-oxopentanoate + tRNA(Glu) + NADP(+) = L-glutamyl-tRNA(Glu) + NADPH + H(+). It functions in the pathway porphyrin-containing compound metabolism; protoporphyrin-IX biosynthesis; 5-aminolevulinate from L-glutamyl-tRNA(Glu): step 1/2. Catalyzes the NADPH-dependent reduction of glutamyl-tRNA(Glu) to glutamate 1-semialdehyde (GSA). In Escherichia coli O45:K1 (strain S88 / ExPEC), this protein is Glutamyl-tRNA reductase.